Reading from the N-terminus, the 629-residue chain is Putative polypeptide N-acetylgalactosaminyltransferase 10 (629 aa).

Residues 1–12 (MGLSRYLSRRHH) lie on the Cytoplasmic side of the membrane. A helical; Signal-anchor for type II membrane protein membrane pass occupies residues 13–33 (WVIQYCALLLFLYFIYSYVAV). The Lumenal segment spans residues 34 to 629 (SNDAPRLNEE…RQANEHKELE (596 aa)). N-linked (GlcNAc...) asparagine glycans are attached at residues Asn143 and Asn177. 5 disulfide bridges follow: Cys154–Cys385, Cys376–Cys454, Cys493–Cys510, Cys539–Cys556, and Cys582–Cys598. A catalytic subdomain A region spans residues 163–275 (LPTVSVIFPF…YNWLPPLLDP (113 aa)). Residues Asp204 and Arg236 each contribute to the substrate site. Mn(2+) contacts are provided by Asp259 and His261. A catalytic subdomain B region spans residues 331–393 (PFDSPVMAGG…PCSRVAHIYR (63 aa)). Trp362 is a binding site for substrate. His390 contacts Mn(2+). Substrate is bound at residue Arg393. The interval 393-406 (RCKYAPFKNAGMGD) is flexible loop. One can recognise a Ricin B-type lectin domain in the interval 526–629 (TRWHDIRPKG…RQANEHKELE (104 aa)).

It belongs to the glycosyltransferase 2 family. GalNAc-T subfamily. Mn(2+) serves as cofactor.

The protein localises to the golgi apparatus membrane. The catalysed reaction is L-seryl-[protein] + UDP-N-acetyl-alpha-D-galactosamine = a 3-O-[N-acetyl-alpha-D-galactosaminyl]-L-seryl-[protein] + UDP + H(+). The enzyme catalyses L-threonyl-[protein] + UDP-N-acetyl-alpha-D-galactosamine = a 3-O-[N-acetyl-alpha-D-galactosaminyl]-L-threonyl-[protein] + UDP + H(+). It functions in the pathway protein modification; protein glycosylation. In terms of biological role, may catalyze the initial reaction in O-linked oligosaccharide biosynthesis, the transfer of an N-acetyl-D-galactosamine residue to a serine or threonine residue on the protein receptor. The sequence is that of Putative polypeptide N-acetylgalactosaminyltransferase 10 from Caenorhabditis briggsae.